The primary structure comprises 136 residues: UPF0225 protein Mpe_A2093 (136 aa).

Belongs to the UPF0225 family.

The sequence is that of UPF0225 protein Mpe_A2093 from Methylibium petroleiphilum (strain ATCC BAA-1232 / LMG 22953 / PM1).